The following is an 89-amino-acid chain: Mitochondrial import inner membrane translocase subunit TIM10 (89 aa).

The Twin CX3C motif signature appears at 37 to 62 (CHKKCIEQIYNDGQLNKNESTCIDRC). 2 cysteine pairs are disulfide-bonded: Cys37–Cys62 and Cys41–Cys58.

It belongs to the small Tim family. In terms of assembly, heterohexamer; composed of 3 copies of TIM9 and 3 copies of TIM10, named soluble 70 kDa complex. Associates directly with the TIM22 complex, whose core is composed of TIM22 and TIM54. Interacts with the transmembrane regions of multi-pass transmembrane proteins in transit.

The protein localises to the mitochondrion inner membrane. Its function is as follows. Mitochondrial intermembrane chaperone that participates in the import and insertion of multi-pass transmembrane proteins into the mitochondrial inner membrane. Also required for the transfer of beta-barrel precursors from the TOM complex to the sorting and assembly machinery (SAM complex) of the outer membrane. Acts as a chaperone-like protein that protects the hydrophobic precursors from aggregation and guide them through the mitochondrial intermembrane space. The polypeptide is Mitochondrial import inner membrane translocase subunit TIM10 (TIM10) (Kluyveromyces lactis (strain ATCC 8585 / CBS 2359 / DSM 70799 / NBRC 1267 / NRRL Y-1140 / WM37) (Yeast)).